The following is an 84-amino-acid chain: Delta-thalatoxin-Tas1a (84 aa).

Residues 1-19 form the signal peptide; sequence MAYLKIVLVALMLVLAVSA. Positions 20–33 are excised as a propeptide; the sequence is MRRPDQQDQDISVA. 3 cysteine pairs are disulfide-bonded: Cys38–Cys78, Cys40–Cys68, and Cys61–Cys79.

It belongs to the sea anemone sodium channel inhibitory toxin family. Type II subfamily.

It localises to the secreted. Its subcellular location is the nematocyst. Functionally, binds specifically to the voltage-gated sodium channel (Nav) and delays its inactivation. This is Delta-thalatoxin-Tas1a from Thalassianthus aster (Fuzzy-tipped anemone).